The primary structure comprises 143 residues: Small ribosomal subunit protein bS6 (143 aa).

Residues 98 to 143 (TEQSLIMKSKDEKGDKPERSERRRRDDEEGEAPAANDNDGDNAEAA) form a disordered region. The segment covering 105–124 (KSKDEKGDKPERSERRRRDD) has biased composition (basic and acidic residues).

Belongs to the bacterial ribosomal protein bS6 family.

Binds together with bS18 to 16S ribosomal RNA. In Xanthomonas euvesicatoria pv. vesicatoria (strain 85-10) (Xanthomonas campestris pv. vesicatoria), this protein is Small ribosomal subunit protein bS6.